A 241-amino-acid chain; its full sequence is Sugar fermentation stimulation protein homolog (241 aa).

It belongs to the SfsA family.

In Yersinia enterocolitica serotype O:8 / biotype 1B (strain NCTC 13174 / 8081), this protein is Sugar fermentation stimulation protein homolog.